The sequence spans 1199 residues: Metabotropic glutamate receptor 1 (1199 aa).

The N-terminal stretch at 1–20 (MVRLLLIFFPMIFLEMSILP) is a signal peptide. Topologically, residues 21–592 (RMPDRKVLLA…IRYLEWSDIE (572 aa)) are extracellular. An intrachain disulfide couples C67 to C109. Y74 contributes to the L-glutamate binding site. N-linked (GlcNAc...) asparagine glycosylation occurs at N98. L-glutamate is bound by residues S165 and 186-188 (SAT). N223 carries N-linked (GlcNAc...) asparagine glycosylation. Y236 contributes to the L-glutamate binding site. Residues C289 and C291 are joined by a disulfide bond. D318 serves as a coordination point for L-glutamate. C378 and C394 are disulfide-bonded. N397 carries an N-linked (GlcNAc...) asparagine glycan. K409 contacts L-glutamate. C432 and C439 are joined by a disulfide. N515 carries an N-linked (GlcNAc...) asparagine glycan. A helical transmembrane segment spans residues 593 to 615 (SIIAIAFSCLGILVTLFVTLIFV). At 616–629 (LYRDTPVVKSSSRE) the chain is on the cytoplasmic side. Residues 630–650 (LCYIILAGIFLGYVCPFTLIA) form a helical membrane-spanning segment. Over 651–658 (KPTTTSCY) the chain is Extracellular. C657 and C746 are joined by a disulfide. The chain crosses the membrane as a helical span at residues 659–680 (LQRLLVGLSSAMCYSALVTKTN). Residues 681–703 (RIARILAGSKKKICTRKPRFMSA) lie on the Cytoplasmic side of the membrane. A helical membrane pass occupies residues 704–727 (WAQVIIASILISVQLTLVVTLIIM). Residues 728–750 (EPPMPILSYPSIKEVYLICNTSN) are Extracellular-facing. N747 carries N-linked (GlcNAc...) asparagine glycosylation. A helical membrane pass occupies residues 751–772 (LGVVAPVGYNGLLIMSCTYYAF). The Cytoplasmic portion of the chain corresponds to 773–785 (KTRNVPANFNEAK). A helical transmembrane segment spans residues 786-807 (YIAFTMYTTCIIWLAFVPIYFG). The Extracellular portion of the chain corresponds to 808–815 (SNYKIITT). The chain crosses the membrane as a helical span at residues 816-840 (CFAVSLSVTVALGCMFTPKMYIIIA). Over 841 to 1199 (KPERNVRSAF…RDYKQSSSTL (359 aa)) the chain is Cytoplasmic. S853 carries the post-translational modification Phosphoserine. T871 is subject to Phosphothreonine. Disordered regions lie at residues 882-906 (GAGN…APKG), 959-1035 (EEDN…QPKS), and 1055-1082 (HAVL…QHLQ). Residues 885 to 895 (NANSNGKSVSW) show a composition bias toward polar residues. Phosphoserine occurs at positions 894 and 969. Residues 1012-1032 (GLPPPLPQQQQQPPPQPPPQQ) show a composition bias toward pro residues. S1097 carries the post-translational modification Phosphoserine. The tract at residues 1118-1177 (VYEREGNTEEDDLEEEEDLPAASKLTPEDSPALTPPSPFRDSVASGSSVPSSPVSESVLC) is disordered. Acidic residues predominate over residues 1125–1136 (TEEDDLEEEEDL). A Phosphoserine modification is found at S1147. T1151 is modified (phosphothreonine). S1154 bears the Phosphoserine mark. Positions 1159–1175 (SVASGSSVPSSPVSESV) are enriched in low complexity.

It belongs to the G-protein coupled receptor 3 family. In terms of assembly, homodimer; disulfide-linked. The PPXXF motif binds HOMER1, HOMER2 and HOMER3. Interacts with TAMALIN. Interacts with RYR1, RYR2, ITPR1, SHANK1 and SHANK3. Interacts with SHIA1. In terms of tissue distribution, expressed in the striatum (at protein level). Expressed in type II unipolar brush cells of the cerebellum (at protein level).

The protein resides in the cell membrane. The protein localises to the postsynaptic cell membrane. Its subcellular location is the cell projection. It localises to the dendrite. Its function is as follows. G-protein coupled receptor for glutamate. Ligand binding causes a conformation change that triggers signaling via guanine nucleotide-binding proteins (G proteins) and modulates the activity of down-stream effectors. Signaling activates a phosphatidylinositol-calcium second messenger system. May participate in the central action of glutamate in the CNS, such as long-term potentiation in the hippocampus and long-term depression in the cerebellum (By. similarity). May function in the light response in the retina. Induces GRID1 and GRID2 cation-channel activation via GNAQ-PLC-PKC pathway in dopaminergic neurons and cerebellar Purkinje cell, respectively. The protein is Metabotropic glutamate receptor 1 (Grm1) of Mus musculus (Mouse).